The sequence spans 1170 residues: PAN2-PAN3 deadenylation complex catalytic subunit PAN2 (1170 aa).

2 WD repeats span residues 104-144 (ENMK…IIKQ) and 280-319 (NISS…HFTD). The tract at residues 319–458 (DMAIPIELPE…DPNEIESLKP (140 aa)) is linker. Residues 399–459 (RRNQVEDTRN…PNEIESLKPE (61 aa)) form a disordered region. Residues 443–452 (VDQEPEDPNE) are compositionally biased toward acidic residues. The USP domain maps to 459 to 846 (EAPPLYRNLE…MPAVLLFQIK (388 aa)). The Exonuclease domain maps to 894-1067 (VALDTEFVSL…EDARTALKLY (174 aa)). Residues Asp897, Glu899, Asp1006, and Asp1059 each coordinate a divalent metal cation. A disordered region spans residues 1094 to 1170 (NFKPPRREDR…PSKASSPLPK (77 aa)). Residues 1098-1108 (PRREDREKELQ) show a composition bias toward basic and acidic residues. Residues 1109 to 1119 (RQSTPPNSTAP) are compositionally biased toward polar residues.

It belongs to the peptidase C19 family. PAN2 subfamily. Forms a heterotrimer with an asymmetric homodimer of the regulatory subunit PAN3 to form the poly(A)-nuclease (PAN) deadenylation complex. A divalent metal cation serves as cofactor.

It localises to the cytoplasm. It carries out the reaction Exonucleolytic cleavage of poly(A) to 5'-AMP.. Its activity is regulated as follows. Positively regulated by the regulatory subunit PAN3. Functionally, catalytic subunit of the poly(A)-nuclease (PAN) deadenylation complex, one of two cytoplasmic mRNA deadenylases involved in mRNA turnover. PAN specifically shortens poly(A) tails of RNA and the activity is stimulated by poly(A)-binding protein PAB1. PAN deadenylation is followed by rapid degradation of the shortened mRNA tails by the CCR4-NOT complex. Deadenylated mRNAs are then degraded by two alternative mechanisms, namely exosome-mediated 3'-5' exonucleolytic degradation, or deadenylation-dependent mRNA decaping and subsequent 5'-3' exonucleolytic degradation by XRN1. May also be involved in post-transcriptional maturation of mRNA poly(A) tails. This is PAN2-PAN3 deadenylation complex catalytic subunit PAN2 from Chaetomium thermophilum (strain DSM 1495 / CBS 144.50 / IMI 039719) (Thermochaetoides thermophila).